The sequence spans 122 residues: Large ribosomal subunit protein uL14c (122 aa).

This sequence belongs to the universal ribosomal protein uL14 family. As to quaternary structure, part of the 50S ribosomal subunit.

The protein localises to the plastid. It is found in the chloroplast. Binds to 23S rRNA. The sequence is that of Large ribosomal subunit protein uL14c from Lemna minor (Common duckweed).